The chain runs to 262 residues: Acyl-[acyl-carrier-protein]--UDP-N-acetylglucosamine O-acyltransferase (262 aa).

The protein belongs to the transferase hexapeptide repeat family. LpxA subfamily. In terms of assembly, homotrimer.

The protein resides in the cytoplasm. The catalysed reaction is a (3R)-hydroxyacyl-[ACP] + UDP-N-acetyl-alpha-D-glucosamine = a UDP-3-O-[(3R)-3-hydroxyacyl]-N-acetyl-alpha-D-glucosamine + holo-[ACP]. It participates in glycolipid biosynthesis; lipid IV(A) biosynthesis; lipid IV(A) from (3R)-3-hydroxytetradecanoyl-[acyl-carrier-protein] and UDP-N-acetyl-alpha-D-glucosamine: step 1/6. Functionally, involved in the biosynthesis of lipid A, a phosphorylated glycolipid that anchors the lipopolysaccharide to the outer membrane of the cell. The sequence is that of Acyl-[acyl-carrier-protein]--UDP-N-acetylglucosamine O-acyltransferase from Psychromonas ingrahamii (strain DSM 17664 / CCUG 51855 / 37).